The primary structure comprises 73 residues: UPF0270 protein SG2298 (73 aa).

The protein belongs to the UPF0270 family.

The chain is UPF0270 protein SG2298 from Sodalis glossinidius (strain morsitans).